The chain runs to 1155 residues: uncharacterized protein (1155 aa).

The first 19 residues, 1–19 (MKKNIFITSLLILLLLLSS), serve as a signal peptide directing secretion. The N-palmitoyl cysteine moiety is linked to residue cysteine 20. Cysteine 20 carries S-diacylglycerol cysteine lipidation. 4 helical membrane passes run 289 to 309 (ISVS…FLIG), 395 to 415 (LGFI…FLIF), 424 to 444 (ALIT…FMLF), and 459 to 479 (ISYA…SMII).

Belongs to the TrbL/VirB6 family.

It is found in the cell membrane. This is an uncharacterized protein from Rickettsia prowazekii (strain Madrid E).